The sequence spans 423 residues: 5-hydroxytryptamine receptor 1A (423 aa).

Residues 1–20 form a disordered region; it reads MEGLSPGQGNNTTSSEGPFG. Residues 1 to 38 lie on the Extracellular side of the membrane; the sequence is MEGLSPGQGNNTTSSEGPFGTRGNATGISDVTFSYQVI. Over residues 7–16 the composition is skewed to polar residues; that stretch reads GQGNNTTSSE. Asn-10, Asn-11, and Asn-24 each carry an N-linked (GlcNAc...) asparagine glycan. The chain crosses the membrane as a helical span at residues 39–59; sequence TSLLLGTLIFCAVLGNACVVA. Topologically, residues 60–73 are cytoplasmic; it reads AIALERSLQNVANY. The helical transmembrane segment at 74–98 threads the bilayer; that stretch reads LIGSLAVTDLMVSVLVLPMAALYQV. The Extracellular segment spans residues 99–107; the sequence is LNKWTLGQV. The helical transmembrane segment at 108 to 132 threads the bilayer; sequence TCDLFIALDVLCCTSSILHLCAIAL. A disulfide bridge links Cys-109 with Cys-187. 2 residues coordinate serotonin: Asp-116 and Cys-120. Positions 133–135 match the DRY motif; important for ligand-induced conformation changes motif; the sequence is DRY. Residues 133–152 are Cytoplasmic-facing; the sequence is DRYWAITDPIDYVNKRTPRR. A helical transmembrane segment spans residues 153–174; sequence AAALISLTWLIGFLISIPPMLG. Over 175-193 the chain is Extracellular; it reads WRTPEDRSDPDACTISKDH. Residues 194–216 traverse the membrane as a helical segment; the sequence is GYTIYSTFGAFYIPLLLMLVLYG. Residues 217 to 346 are Cytoplasmic-facing; the sequence is RIFRAARFRI…LARERKTVKT (130 aa). The segment at 235-277 is disordered; sequence RKGADARSGVSPAPQPRKSVNGEPGGREWRQGPGSKAGGPLCT. Positions 345, 346, and 352 each coordinate 1D-myo-inositol 4-phosphate. A helical transmembrane segment spans residues 347-370; it reads LGIIMGTFILCWLPFFIVALVLPF. At 371–378 the chain is on the extracellular side; it reads CESSCHMP. The chain crosses the membrane as a helical span at residues 379–403; sequence TLLGAIINWLGYSNSLLNPVIYAYF. Positions 396–400 match the NPxxY motif; important for ligand-induced conformation changes and signaling motif; it reads NPVIY. 1D-myo-inositol 4-phosphate contacts are provided by Phe-403, Asn-404, and Lys-405. Topologically, residues 404–423 are cytoplasmic; the sequence is NKDFQNAFKKIVRCKFCRRR.

This sequence belongs to the G-protein coupled receptor 1 family. 5-hydroxytryptamine receptor subfamily. HTR1A sub-subfamily. In terms of assembly, heterodimer; heterodimerizes with GPER1. Interacts with YIF1B. Interacts with GPR39 and GALR1.

Its subcellular location is the cell membrane. The protein localises to the cell projection. The protein resides in the dendrite. G-protein coupled receptor activity is regulated by lipids: phosphatidylinositol 4-phosphate increases HTR1A-mediated activity. Its function is as follows. G-protein coupled receptor for 5-hydroxytryptamine (serotonin). Also functions as a receptor for various drugs and psychoactive substances. Ligand binding causes a conformation change that triggers signaling via guanine nucleotide-binding proteins (G proteins) and modulates the activity of downstream effectors, such as adenylate cyclase. HTR1A is coupled to G(i)/G(o) G alpha proteins and mediates inhibitory neurotransmission: signaling inhibits adenylate cyclase activity and activates a phosphatidylinositol-calcium second messenger system that regulates the release of Ca(2+) ions from intracellular stores. Beta-arrestin family members regulate signaling by mediating both receptor desensitization and resensitization processes. The chain is 5-hydroxytryptamine receptor 1A (HTR1A) from Vulpes vulpes (Red fox).